Reading from the N-terminus, the 228-residue chain is Ribosomal RNA small subunit methyltransferase G (228 aa).

S-adenosyl-L-methionine-binding positions include Gly-89, Leu-94, 140 to 141 (VE), and Arg-159.

It belongs to the methyltransferase superfamily. RNA methyltransferase RsmG family.

Its subcellular location is the cytoplasm. It catalyses the reaction guanosine(527) in 16S rRNA + S-adenosyl-L-methionine = N(7)-methylguanosine(527) in 16S rRNA + S-adenosyl-L-homocysteine. Specifically methylates the N7 position of guanine in position 527 of 16S rRNA. The polypeptide is Ribosomal RNA small subunit methyltransferase G (Burkholderia multivorans (strain ATCC 17616 / 249)).